The sequence spans 206 residues: ATP-dependent Clp protease proteolytic subunit 1 (206 aa).

Catalysis depends on Ser-100, which acts as the Nucleophile. His-125 is an active-site residue.

Belongs to the peptidase S14 family. In terms of assembly, fourteen ClpP subunits assemble into 2 heptameric rings which stack back to back to give a disk-like structure with a central cavity, resembling the structure of eukaryotic proteasomes.

The protein localises to the cytoplasm. The catalysed reaction is Hydrolysis of proteins to small peptides in the presence of ATP and magnesium. alpha-casein is the usual test substrate. In the absence of ATP, only oligopeptides shorter than five residues are hydrolyzed (such as succinyl-Leu-Tyr-|-NHMec, and Leu-Tyr-Leu-|-Tyr-Trp, in which cleavage of the -Tyr-|-Leu- and -Tyr-|-Trp bonds also occurs).. Cleaves peptides in various proteins in a process that requires ATP hydrolysis. Has a chymotrypsin-like activity. Plays a major role in the degradation of misfolded proteins. The chain is ATP-dependent Clp protease proteolytic subunit 1 from Myxococcus xanthus (strain DK1622).